Consider the following 74-residue polypeptide: Ubiquitin-like protein FUBI (74 aa).

The protein belongs to the ubiquitin family.

The sequence is that of Ubiquitin-like protein FUBI (Fau) from Mus spicilegus (Steppe mouse).